Consider the following 408-residue polypeptide: Menaquinone reductase (408 aa).

FAD contacts are provided by residues 13 to 17, 46 to 49, Arg-103, Ala-127, Asp-290, and 302 to 303; these read GAGPA, CGDG, and GI.

This sequence belongs to the geranylgeranyl reductase family. FAD serves as cofactor.

The enzyme catalyses menaquinone-9 + AH2 = beta-dihydromenaquinone-9 + A. The protein operates within quinol/quinone metabolism; menaquinone biosynthesis. Catalyzes the reduction of a single double bond in the isoprenoid tail of menaquinone (MK-9) in M.tuberculosis, likely the beta-isoprene unit, forming the predominant form of menaquinone found in mycobacteria, MK-9(II-H2). The polypeptide is Menaquinone reductase (Mycobacterium tuberculosis (strain CDC 1551 / Oshkosh)).